A 417-amino-acid chain; its full sequence is Acetate kinase (417 aa).

Asn9 contributes to the Mg(2+) binding site. Residue Lys16 participates in ATP binding. Arg90 provides a ligand contact to substrate. Asp147 acts as the Proton donor/acceptor in catalysis. Residues 207–211 (HIGNG), 282–284 (DLR), and 330–334 (GIGEN) contribute to the ATP site. Residue Glu384 participates in Mg(2+) binding.

This sequence belongs to the acetokinase family. Homodimer. Mg(2+) is required as a cofactor. Mn(2+) serves as cofactor.

The protein resides in the cytoplasm. It catalyses the reaction acetate + ATP = acetyl phosphate + ADP. Its pathway is metabolic intermediate biosynthesis; acetyl-CoA biosynthesis; acetyl-CoA from acetate: step 1/2. Functionally, catalyzes the formation of acetyl phosphate from acetate and ATP. Can also catalyze the reverse reaction. The chain is Acetate kinase from Staphylococcus epidermidis (strain ATCC 35984 / DSM 28319 / BCRC 17069 / CCUG 31568 / BM 3577 / RP62A).